Consider the following 119-residue polypeptide: Large ribosomal subunit protein bL20 (119 aa).

This sequence belongs to the bacterial ribosomal protein bL20 family.

Functionally, binds directly to 23S ribosomal RNA and is necessary for the in vitro assembly process of the 50S ribosomal subunit. It is not involved in the protein synthesizing functions of that subunit. The sequence is that of Large ribosomal subunit protein bL20 from Saccharophagus degradans (strain 2-40 / ATCC 43961 / DSM 17024).